A 534-amino-acid polypeptide reads, in one-letter code: Apolipoprotein N-acyltransferase (534 aa).

The next 7 membrane-spanning stretches (helical) occupy residues 18 to 38, 39 to 59, 74 to 94, 105 to 125, 127 to 147, 178 to 198, and 209 to 229; these read LLAIAAGAFAVLALPPFGFFA, AMFLSFTLLVWLIDGAAASPD, WLFGFGYFVAGLWWLGHALLV, LAILGLPACLAIFYGLAVALA, IFWSDGMGRIAALAAGFGLME, VIGAMGVTALAVFVFSAPALA, and ALAVLLFAAHLGYGAYALYVA. Residues 246–496 form the CN hydrolase domain; it reads VQPDIDQAAK…TGFIDATVDR (251 aa). Catalysis depends on glutamate 291, which acts as the Proton acceptor. Lysine 355 is a catalytic residue. The Nucleophile role is filled by cysteine 408. Residues 504–524 form a helical membrane-spanning segment; that stretch reads TFPRQTYFWLTEALLILIALV.

It belongs to the CN hydrolase family. Apolipoprotein N-acyltransferase subfamily.

The protein resides in the cell inner membrane. It catalyses the reaction N-terminal S-1,2-diacyl-sn-glyceryl-L-cysteinyl-[lipoprotein] + a glycerophospholipid = N-acyl-S-1,2-diacyl-sn-glyceryl-L-cysteinyl-[lipoprotein] + a 2-acyl-sn-glycero-3-phospholipid + H(+). The protein operates within protein modification; lipoprotein biosynthesis (N-acyl transfer). Functionally, catalyzes the phospholipid dependent N-acylation of the N-terminal cysteine of apolipoprotein, the last step in lipoprotein maturation. This chain is Apolipoprotein N-acyltransferase, found in Rhizobium leguminosarum bv. trifolii (strain WSM2304).